Consider the following 323-residue polypeptide: Sphingolipid delta(4)-desaturase DES1 (323 aa).

G2 carries N-myristoyl glycine lipidation. 2 helical membrane-spanning segments follow: residues 41–61 (PNLI…FYIV) and 68–88 (WVIF…TLAI). The short motif at 89–93 (HEIAH) is the Histidine box-1 element. A helical membrane pass occupies residues 102-122 (AMWNRWFGMFANLPIGIPYSI). The short motif at 128 to 132 (HMDHH) is the Histidine box-2 element. The next 3 membrane-spanning stretches (helical) occupy residues 152–172 (FFCT…FYAF), 184–204 (YLEV…YYFL), and 209–229 (LVYM…SGHF). The Histidine box-3 signature appears at 259 to 263 (HNEHH). Phosphoserine is present on S307.

Belongs to the fatty acid desaturase type 1 family. DEGS subfamily. In terms of assembly, interacts with RLBP1; the interaction increases synthesis of chromophore-precursors by DEGS1. Myristoylation can target the enzyme to the mitochondria leading to an increase in ceramide levels. Ubiquitous.

It is found in the mitochondrion membrane. It localises to the endoplasmic reticulum membrane. It catalyses the reaction an N-acylsphinganine + 2 Fe(II)-[cytochrome b5] + O2 + 2 H(+) = an N-acylsphing-4-enine + 2 Fe(III)-[cytochrome b5] + 2 H2O. It carries out the reaction all-trans-retinol = 11-cis-retinol. The catalysed reaction is all-trans-retinol = 9-cis-retinol. The enzyme catalyses all-trans-retinol = 13-cis-retinol. It catalyses the reaction 11-cis-retinol = 13-cis-retinol. It carries out the reaction 11-cis-retinol = 9-cis-retinol. Has sphingolipid-delta-4-desaturase activity. Converts D-erythro-sphinganine to D-erythro-sphingosine (E-sphing-4-enine). Catalyzes the equilibrium isomerization of retinols. The protein is Sphingolipid delta(4)-desaturase DES1 of Homo sapiens (Human).